The primary structure comprises 300 residues: MKIDLTTLVTESRNQASEQIDVLSTVEMLTVINKEDQKVALAVEAILPQIAEVVDAIAVAFQCGGRLIYIGAGTSGRLGILDASECPPTYGSNPDLVVGLIAGGHKAILKAVENAEDNRELGASDLQDLGLNEKDVLVGIAASGRTPYVLGAMAYAKSVGATVATLSCNPNSPMTELADINMTPVVGPEIVTGSSRMKAGTAQKLVLNMLTTGAMIRTGKVFGNLMVDVEATNAKLVQRQKNIVIEATGCSETEAAESLSQCNNHCKTAILIVLSGLDAKSATDKLTEYNGFIRDALANS.

In terms of domain architecture, SIS spans 57–220 (IAVAFQCGGR…TTGAMIRTGK (164 aa)). The active-site Proton donor is the E85. The active site involves E116.

The protein belongs to the GCKR-like family. MurNAc-6-P etherase subfamily. Homodimer.

It catalyses the reaction N-acetyl-D-muramate 6-phosphate + H2O = N-acetyl-D-glucosamine 6-phosphate + (R)-lactate. The protein operates within amino-sugar metabolism; 1,6-anhydro-N-acetylmuramate degradation. It participates in amino-sugar metabolism; N-acetylmuramate degradation. It functions in the pathway cell wall biogenesis; peptidoglycan recycling. In terms of biological role, specifically catalyzes the cleavage of the D-lactyl ether substituent of MurNAc 6-phosphate, producing GlcNAc 6-phosphate and D-lactate. Together with AnmK, is also required for the utilization of anhydro-N-acetylmuramic acid (anhMurNAc) either imported from the medium or derived from its own cell wall murein, and thus plays a role in cell wall recycling. The sequence is that of N-acetylmuramic acid 6-phosphate etherase from Aliivibrio salmonicida (strain LFI1238) (Vibrio salmonicida (strain LFI1238)).